Here is a 226-residue protein sequence, read N- to C-terminus: Cytidylate kinase (226 aa).

10 to 18 (GPAGAGKST) is a binding site for ATP.

It belongs to the cytidylate kinase family. Type 1 subfamily.

Its subcellular location is the cytoplasm. It catalyses the reaction CMP + ATP = CDP + ADP. It carries out the reaction dCMP + ATP = dCDP + ADP. This chain is Cytidylate kinase, found in Caldicellulosiruptor saccharolyticus (strain ATCC 43494 / DSM 8903 / Tp8T 6331).